The chain runs to 159 residues: 17 kDa surface antigen (159 aa).

The signal sequence occupies residues 1–19 (MKLLSKIMIIALATSMLQA). A lipid anchor (N-palmitoyl cysteine) is attached at Cys-20. Cys-20 carries the S-diacylglycerol cysteine lipid modification.

The protein belongs to the rickettsiale 17 kDa surface antigen family.

It localises to the cell outer membrane. This Rickettsia conorii (strain ATCC VR-613 / Malish 7) protein is 17 kDa surface antigen (omp).